The sequence spans 285 residues: Putative phosphatase MG125 (285 aa).

The active-site Nucleophile is Asp8. Asp8 serves as a coordination point for Mg(2+). Leu9 contacts phosphate. Position 10 (Asp10) interacts with Mg(2+). Residues 44–45 and Lys205 contribute to the phosphate site; that span reads TG. Mg(2+) is bound by residues Asp228 and Ser229. Phosphate is bound at residue Asn231.

It belongs to the HAD-like hydrolase superfamily. Cof family. Requires Mg(2+) as cofactor.

This is Putative phosphatase MG125 from Mycoplasma genitalium (strain ATCC 33530 / DSM 19775 / NCTC 10195 / G37) (Mycoplasmoides genitalium).